Here is a 399-residue protein sequence, read N- to C-terminus: Acetate kinase (399 aa).

Asn-7 contacts Mg(2+). Lys-14 is a binding site for ATP. Arg-90 is a binding site for substrate. Asp-147 (proton donor/acceptor) is an active-site residue. ATP is bound by residues 207–211 (HLGNG), 282–284 (DFR), and 330–334 (GIGEN). Glu-385 contributes to the Mg(2+) binding site.

Belongs to the acetokinase family. In terms of assembly, homodimer. It depends on Mg(2+) as a cofactor. The cofactor is Mn(2+).

It is found in the cytoplasm. The catalysed reaction is acetate + ATP = acetyl phosphate + ADP. It functions in the pathway metabolic intermediate biosynthesis; acetyl-CoA biosynthesis; acetyl-CoA from acetate: step 1/2. In terms of biological role, catalyzes the formation of acetyl phosphate from acetate and ATP. Can also catalyze the reverse reaction. The chain is Acetate kinase from Caldicellulosiruptor bescii (strain ATCC BAA-1888 / DSM 6725 / KCTC 15123 / Z-1320) (Anaerocellum thermophilum).